Reading from the N-terminus, the 290-residue chain is Eukaryotic translation initiation factor 3 subunit F-2 (290 aa).

The 139-residue stretch at 12 to 150 (VRLQPLVLFQ…TRLYCGVTMG (139 aa)) folds into the MPN domain.

This sequence belongs to the eIF-3 subunit F family. Component of the eukaryotic translation initiation factor 3 (eIF-3) complex. The eIF-3 complex interacts with pix.

The protein localises to the cytoplasm. Functionally, component of the eukaryotic translation initiation factor 3 (eIF-3) complex, which is involved in protein synthesis of a specialized repertoire of mRNAs and, together with other initiation factors, stimulates binding of mRNA and methionyl-tRNAi to the 40S ribosome. The eIF-3 complex specifically targets and initiates translation of a subset of mRNAs involved in cell proliferation. This chain is Eukaryotic translation initiation factor 3 subunit F-2, found in Drosophila virilis (Fruit fly).